A 318-amino-acid polypeptide reads, in one-letter code: MSQSRHVPVMLQRCLDMLAPALTEPGAVVVDCTLGLGGHSEALLTQFPEARLVALDRDKEALRLSGERLAPFGDRATLVHAVYDELPDVLDRLGVPRVQGVLFDLGVSSMQLDEADRGFAYAQDAPLDMRMDQTTGISAAEVLNTYPPGEIVRILRAYGEEKQAKRIVSAIVREREKEPFSNSARLVELIRDSLPQAAKRTGGNPAKRTFQALRIEVNGELSVLERAIPAAVKALAVGGRIAVLSYHSLEDRLVKQVFAAGAATTAPPGLPVVPERYQPRLKLLTRGAELPTEEEIAENRRAAPARLRGAQRIREDAE.

S-adenosyl-L-methionine is bound by residues 37–39 (GGH), Asp-56, Tyr-83, Asp-104, and Gln-111. The segment at 293-318 (EEEIAENRRAAPARLRGAQRIREDAE) is disordered.

Belongs to the methyltransferase superfamily. RsmH family.

The protein localises to the cytoplasm. It catalyses the reaction cytidine(1402) in 16S rRNA + S-adenosyl-L-methionine = N(4)-methylcytidine(1402) in 16S rRNA + S-adenosyl-L-homocysteine + H(+). Its function is as follows. Specifically methylates the N4 position of cytidine in position 1402 (C1402) of 16S rRNA. This is Ribosomal RNA small subunit methyltransferase H from Streptomyces avermitilis (strain ATCC 31267 / DSM 46492 / JCM 5070 / NBRC 14893 / NCIMB 12804 / NRRL 8165 / MA-4680).